We begin with the raw amino-acid sequence, 847 residues long: Matrin-3 (847 aa).

N-acetylserine is present on serine 2. Residue lysine 3 is modified to N6-acetyllysine; alternate. Lysine 3 is covalently cross-linked (Glycyl lysine isopeptide (Lys-Gly) (interchain with G-Cter in SUMO2); alternate). Phosphoserine occurs at positions 4, 9, 11, 14, 22, 41, 118, and 126. Residues lysine 132 and lysine 146 each participate in a glycyl lysine isopeptide (Lys-Gly) (interchain with G-Cter in SUMO2) cross-link. Disordered regions lie at residues 146-174 (KRRR…YRVP) and 187-214 (DSFD…SGYY). Threonine 150 bears the Phosphothreonine mark. Serine 157 is subject to Phosphoserine. Tyrosine 158 is subject to Phosphotyrosine. Over residues 160–174 (RDGRSATREPPYRVP) the composition is skewed to basic and acidic residues. Phosphoserine is present on residues serine 164, serine 188, and serine 195. Basic and acidic residues predominate over residues 201-214 (DYDHGSRSQESGYY). Residue tyrosine 202 is modified to Phosphotyrosine. 3 positions are modified to phosphoserine: serine 206, serine 208, and serine 211. The residue at position 219 (tyrosine 219) is a Phosphotyrosine. Serine 234 is modified (phosphoserine). Lysine 245 is covalently cross-linked (Glycyl lysine isopeptide (Lys-Gly) (interchain with G-Cter in SUMO2)). Serine 264 carries the phosphoserine modification. Lysine 269 is covalently cross-linked (Glycyl lysine isopeptide (Lys-Gly) (interchain with G-Cter in SUMO2)). Serine 275 bears the Phosphoserine mark. The segment at 342 to 394 (PFMLQQSTNPAPGILGPPPPSFHLGGPAVGPRGNLGAGNGNLQGPRHMQKGRV) is disordered. The region spanning 398–473 (RVVHIMDFQR…KPVRVHLSQK (76 aa)) is the RRM 1 domain. Residues lysine 478, lysine 487, and lysine 491 each participate in a glycyl lysine isopeptide (Lys-Gly) (interchain with G-Cter in SUMO2) cross-link. The RRM 2 domain occupies 496 to 571 (RVIHLSNLPH…RCVKVDLSEK (76 aa)). Phosphoserine occurs at positions 509 and 511. Residue lysine 515 forms a Glycyl lysine isopeptide (Lys-Gly) (interchain with G-Cter in SUMO2) linkage. Lysine 522 is subject to N6-acetyllysine; alternate. Lysine 522 participates in a covalent cross-link: Glycyl lysine isopeptide (Lys-Gly) (interchain with G-Cter in SUMO2); alternate. Serine 533 is subject to Phosphoserine. Glycyl lysine isopeptide (Lys-Gly) (interchain with G-Cter in SUMO2) cross-links involve residues lysine 554 and lysine 555. Residue lysine 571 is modified to N6-acetyllysine. A disordered region spans residues 588 to 786 (KKDKSRKRSY…DEYRIGPYQP (199 aa)). Phosphoserine is present on residues serine 596, serine 598, serine 604, and serine 606. Positions 600–643 (DGKESPSDKKSKTDGSQKTESSTEGKEQEEKSGEDGEKDTKDDQ) are enriched in basic and acidic residues. Glycyl lysine isopeptide (Lys-Gly) (interchain with G-Cter in SUMO2) cross-links involve residues lysine 617 and lysine 630. Residues 653-665 (ESEDELLVDEEEA) are compositionally biased toward acidic residues. A phosphoserine mark is found at serine 654, serine 671, serine 673, and serine 674. Residues 666 to 676 (AALLESGSSVG) show a composition bias toward low complexity. The residue at position 679 (threonine 679) is a Phosphothreonine. Serine 689 is modified (phosphoserine). The segment covering 689–704 (SDGKKEPSDKAVKKDG) has biased composition (basic and acidic residues). The Nuclear localization signal signature appears at 710–718 (AKKKLKKVD). Glycyl lysine isopeptide (Lys-Gly) (interchain with G-Cter in SUMO2) cross-links involve residues lysine 719 and lysine 736. A Phosphothreonine modification is found at threonine 741. 3 positions are modified to phosphoserine: serine 747, serine 759, and serine 766. Over residues 767 to 780 (DENKDDYTIPDEYR) the composition is skewed to basic and acidic residues. Lysine 770 is covalently cross-linked (Glycyl lysine isopeptide (Lys-Gly) (interchain with G-Cter in SUMO2)). A Matrin-type zinc finger spans residues 801 to 832 (FYCKLCSLFYTNEEVAKNTHCSSLPHYQKLKK). An N6-acetyllysine; alternate modification is found at lysine 836. A Glycyl lysine isopeptide (Lys-Gly) (interchain with G-Cter in SUMO2); alternate cross-link involves residue lysine 836.

Part of a complex consisting of SFPQ, NONO and MATR3. Interacts with AGO1 and AGO2. Part of a complex composed at least of ASH2L, EMSY, HCFC1, HSPA8, CCAR2, MATR3, MKI67, RBBP5, TUBB2A, WDR5 and ZNF335; this complex may have a histone H3-specific methyltransferase activity. Interacts with TARDBP. Part of the HDP-RNP complex composed of at least HEXIM1, PRKDC, XRCC5, XRCC6, paraspeckle proteins (SFPQ, NONO, PSPC1, RBM14, and MATR3) and NEAT1 RNA. Interacts with FUS. Interacts with IGF2BP1; the interaction is enhanced by SEPIN14P20 peptide RBPR. Interacts with IGF2BP2 and IGF2BP3. Interacts with RBPMS.

The protein resides in the nucleus matrix. Its function is as follows. May play a role in transcription or may interact with other nuclear matrix proteins to form the internal fibrogranular network. In association with the SFPQ-NONO heteromer may play a role in nuclear retention of defective RNAs. Plays a role in the regulation of DNA virus-mediated innate immune response by assembling into the HDP-RNP complex, a complex that serves as a platform for IRF3 phosphorylation and subsequent innate immune response activation through the cGAS-STING pathway. Binds to N6-methyladenosine (m6A)-containing mRNAs and contributes to MYC stability by binding to m6A-containing MYC mRNAs. May bind to specific miRNA hairpins. The sequence is that of Matrin-3 (MATR3) from Homo sapiens (Human).